A 1423-amino-acid chain; its full sequence is Protein Shroom2 (1423 aa).

The interval 1-101 (MRPSTVTSRI…PDHTLPKADA (101 aa)) is disordered. Positions 8–27 (SRIWWSESSSSSSHDLSGSW) are enriched in low complexity. Composition is skewed to polar residues over residues 28-69 (EHTS…NSSI) and 83-93 (GSFSTCSSTPD). Ser-103 carries the phosphoserine modification. A disordered region spans residues 116 to 171 (ASRPGSSRQSQSTGDPQGLQDRPSSFLPRVPGNSSKSPRPEDNIEPKIATSGRSNF). Positions 119–130 (PGSSRQSQSTGD) are enriched in polar residues. Phosphoserine is present on residues Ser-185, Ser-197, and Ser-291. Disordered regions lie at residues 300-357 (SYHG…VNQK), 586-630 (TSFQ…SAPR), 758-855 (EILS…SGGQ), 872-930 (PSSS…KLTD), and 1045-1085 (VETP…KEKT). In terms of domain architecture, ASD1 spans 575–677 (LKEAQTRVLK…SEPEKINEVG (103 aa)). Residues 761-771 (SEDRKVEKASE) are compositionally biased toward basic and acidic residues. A phosphoserine mark is found at Ser-806, Ser-830, Ser-831, and Ser-833. Residue Thr-834 is modified to Phosphothreonine. The segment covering 872–885 (PSSSVLSSAQPQDS) has biased composition (low complexity). Residues 891–923 (DPTSPQPEAQLSSKCQHLQTSTMETSRSPSPQF) show a composition bias toward polar residues. Phosphoserine occurs at positions 918 and 920. Pro residues predominate over residues 1054–1065 (PEPQPPSTPAPP). Ser-1072 and Ser-1329 each carry phosphoserine. Residues 1092 to 1418 (EELAREIVGK…QLKCLFDSLQ (327 aa)) enclose the ASD2 domain.

Belongs to the shroom family. As to quaternary structure, interacts with F-actin.

Its subcellular location is the apical cell membrane. The protein resides in the cell junction. The protein localises to the tight junction. It is found in the cytoplasm. It localises to the cytoskeleton. Functionally, may be involved in endothelial cell morphology changes during cell spreading. In the retinal pigment epithelium, may regulate the biogenesis of melanosomes and promote their association with the apical cell surface by inducing gamma-tubulin redistribution. This Rattus norvegicus (Rat) protein is Protein Shroom2 (Shroom2).